Reading from the N-terminus, the 137-residue chain is Large ribosomal subunit protein uL16 (137 aa).

It belongs to the universal ribosomal protein uL16 family. Part of the 50S ribosomal subunit.

Binds 23S rRNA and is also seen to make contacts with the A and possibly P site tRNAs. The protein is Large ribosomal subunit protein uL16 of Pseudomonas putida (strain ATCC 47054 / DSM 6125 / CFBP 8728 / NCIMB 11950 / KT2440).